Consider the following 151-residue polypeptide: Small ribosomal subunit protein uS15 (151 aa).

Belongs to the universal ribosomal protein uS15 family. In terms of assembly, component of the small ribosomal subunit.

Its subcellular location is the cytoplasm. In terms of biological role, component of the small ribosomal subunit. The ribosome is a large ribonucleoprotein complex responsible for the synthesis of proteins in the cell. In Xenopus laevis (African clawed frog), this protein is Small ribosomal subunit protein uS15 (rps13).